Reading from the N-terminus, the 190-residue chain is Putative 3-methyladenine DNA glycosylase (190 aa).

It belongs to the DNA glycosylase MPG family.

This Rubrobacter xylanophilus (strain DSM 9941 / JCM 11954 / NBRC 16129 / PRD-1) protein is Putative 3-methyladenine DNA glycosylase.